The sequence spans 278 residues: tRNA (guanine-N(7)-)-methyltransferase (278 aa).

A disordered region spans residues 1 to 42 (MRHDGPMHVQPGVGLQSDTSSSTGTGSGPADEPEAEKSAWGY). S-adenosyl-L-methionine-binding residues include Glu-106, Glu-131, Asn-160, and Asp-183. Asp-183 is an active-site residue. Substrate is bound by residues Lys-187, Asp-219, and 256-259 (TKYE).

The protein belongs to the class I-like SAM-binding methyltransferase superfamily. TrmB family.

The catalysed reaction is guanosine(46) in tRNA + S-adenosyl-L-methionine = N(7)-methylguanosine(46) in tRNA + S-adenosyl-L-homocysteine. It functions in the pathway tRNA modification; N(7)-methylguanine-tRNA biosynthesis. Functionally, catalyzes the formation of N(7)-methylguanine at position 46 (m7G46) in tRNA. The protein is tRNA (guanine-N(7)-)-methyltransferase of Mycobacterium ulcerans (strain Agy99).